The following is a 423-amino-acid chain: CDP-diacylglycerol--serine O-phosphatidyltransferase 2 (423 aa).

Helical transmembrane passes span 38-58 (PHTISVLLVGACLLIWASGAL), 77-97 (WAMIAVFLAYCTLQAPSTILI), 103-123 (VWRLVHGLAVVYLVALAFLLF), 195-215 (LLLWVLSIGFELMELTFRHML), 222-242 (WWDSIILDILICNWFGIWAGM), 294-314 (FVQVLFLCVVFMTVELNTFFL), 319-339 (WIPPRNPLVVYRLILWWLIAI), 359-379 (GAFCWLSLAICIVELLICMKF), and 390-410 (TWLIIFWSSVGVALVVFLLAW).

Belongs to the CDP-alcohol phosphatidyltransferase class-I family.

It localises to the endoplasmic reticulum membrane. It carries out the reaction a CDP-1,2-diacyl-sn-glycerol + L-serine = a 1,2-diacyl-sn-glycero-3-phospho-L-serine + CMP + H(+). It participates in phospholipid metabolism; phosphatidylethanolamine biosynthesis; phosphatidylethanolamine from CDP-diacylglycerol: step 1/2. Its function is as follows. Catalyzes a base-exchange reaction in which the polar head group of phosphatidylethanolamine (PE) or phosphatidylcholine (PC) is replaced by L-serine. In Oryza sativa subsp. japonica (Rice), this protein is CDP-diacylglycerol--serine O-phosphatidyltransferase 2 (PSS2).